A 452-amino-acid chain; its full sequence is UDP-N-acetylmuramoyl-tripeptide--D-alanyl-D-alanine ligase (452 aa).

107-113 contacts ATP; the sequence is GSSGKTS.

This sequence belongs to the MurCDEF family. MurF subfamily. In terms of assembly, monomer.

The protein resides in the cytoplasm. It catalyses the reaction D-alanyl-D-alanine + UDP-N-acetyl-alpha-D-muramoyl-L-alanyl-gamma-D-glutamyl-meso-2,6-diaminopimelate + ATP = UDP-N-acetyl-alpha-D-muramoyl-L-alanyl-gamma-D-glutamyl-meso-2,6-diaminopimeloyl-D-alanyl-D-alanine + ADP + phosphate + H(+). It functions in the pathway cell wall biogenesis; peptidoglycan biosynthesis. Involved in cell wall formation. Catalyzes the final step in the synthesis of UDP-N-acetylmuramoyl-pentapeptide, the precursor of murein. The polypeptide is UDP-N-acetylmuramoyl-tripeptide--D-alanyl-D-alanine ligase (Escherichia coli (strain K12)).